Here is a 259-residue protein sequence, read N- to C-terminus: Protein GrpE (259 aa).

2 disordered regions span residues 1–75 and 227–259; these read MNSD…KGSD and GPGP…KDEN. Low complexity predominate over residues 20–40; it reads NNPSENFVSSSNSNESVNQVE. The span at 46–60 shows a compositional bias: basic and acidic residues; the sequence is EVEHQVKNDSVDTAK. A compositionally biased stretch (polar residues) spans 61–73; sequence EQSSTSCESNIKG.

This sequence belongs to the GrpE family. In terms of assembly, homodimer.

Its subcellular location is the cytoplasm. In terms of biological role, participates actively in the response to hyperosmotic and heat shock by preventing the aggregation of stress-denatured proteins, in association with DnaK and GrpE. It is the nucleotide exchange factor for DnaK and may function as a thermosensor. Unfolded proteins bind initially to DnaJ; upon interaction with the DnaJ-bound protein, DnaK hydrolyzes its bound ATP, resulting in the formation of a stable complex. GrpE releases ADP from DnaK; ATP binding to DnaK triggers the release of the substrate protein, thus completing the reaction cycle. Several rounds of ATP-dependent interactions between DnaJ, DnaK and GrpE are required for fully efficient folding. This chain is Protein GrpE, found in Prochlorococcus marinus (strain NATL1A).